The sequence spans 471 residues: 5-hydroxytryptamine receptor 2A (471 aa).

Over 1–80 (MEILCEDNTS…LQEKNWSALL (80 aa)) the chain is Extracellular. N-linked (GlcNAc...) asparagine glycans are attached at residues Asn8, Asn38, Asn44, Asn51, and Asn54. A helical transmembrane segment spans residues 81 to 97 (TAVVIILTIAGNILVIM). The Cytoplasmic portion of the chain corresponds to 98 to 111 (AVSLEKKLQNATNY). A helical membrane pass occupies residues 112–137 (FLMSLAIADMLLGFLVMPVSMLTILY). The Extracellular portion of the chain corresponds to 138–146 (GYRWPLPSK). The chain crosses the membrane as a helical span at residues 147-171 (LCAVWIYLDVLFSTASIMHLCAISL). Cys148 and Cys227 are oxidised to a cystine. Asp155 contacts serotonin. The short motif at 172-174 (DRY) is the DRY motif; important for ligand-induced conformation changes element. At 172-191 (DRYVAIQNPIHHSRFNSRTK) the chain is on the cytoplasmic side. A helical membrane pass occupies residues 192–215 (AFLKIIAVWTISVGVSMPIPVFGL). At 216–232 (QDDSKVFKQGSCLLADD) the chain is on the extracellular side. The chain crosses the membrane as a helical span at residues 233 to 258 (NFVLIGSFVAFFIPLTIMVITYFLTI). The Cytoplasmic segment spans residues 259 to 322 (KSLQKEATLC…QSISNEQKAC (64 aa)). Ser280 carries the phosphoserine modification. A helical transmembrane segment spans residues 323–348 (KVLGIVFFLFVVMWCPFFITNIMAVI). Serotonin is bound at residue Asn343. A disulfide bridge links Cys349 with Cys353. Residues 349-356 (CKESCNEH) lie on the Extracellular side of the membrane. A helical membrane pass occupies residues 357–382 (VIGALLNVFVWIGYLSSAVNPLVYTL). The NPxxY motif; important for ligand-induced conformation changes and signaling signature appears at 376 to 380 (NPLVY). Over 383–471 (FNKTYRSAFS…NTVNEKVSCV (89 aa)) the chain is Cytoplasmic. Positions 469–471 (SCV) match the PDZ-binding motif.

The protein belongs to the G-protein coupled receptor 1 family. Interacts (via C-terminus) with MPDZ and PATJ. May interact (via C-terminus) with MPP3, PRDX6, DLG4, DLG1, CASK, APBA1 and MAGI2. Interacts with GRM2 and DRD2; this may affect signaling.

It is found in the cell membrane. The protein localises to the cell projection. The protein resides in the dendrite. Its subcellular location is the axon. It localises to the cytoplasmic vesicle. It is found in the membrane. The protein localises to the caveola. The protein resides in the presynapse. With respect to regulation, G-protein coupled receptor activity is regulated by lipids: oleamide increases HTR2A-mediated activity. Its function is as follows. G-protein coupled receptor for 5-hydroxytryptamine (serotonin). Also functions as a receptor for various drugs and psychoactive substances, including mescaline, psilocybin, 1-(2,5-dimethoxy-4-iodophenyl)-2-aminopropane (DOI) and lysergic acid diethylamide (LSD). Ligand binding causes a conformation change that triggers signaling via guanine nucleotide-binding proteins (G proteins) and modulates the activity of downstream effectors. HTR2A is coupled to G(q)/G(11) G alpha proteins and activates phospholipase C-beta, releasing diacylglycerol (DAG) and inositol 1,4,5-trisphosphate (IP3) second messengers that modulate the activity of phosphatidylinositol 3-kinase and promote the release of Ca(2+) ions from intracellular stores, respectively. Beta-arrestin family members inhibit signaling via G proteins and mediate activation of alternative signaling pathways. Affects neural activity, perception, cognition and mood. Plays a role in the regulation of behavior, including responses to anxiogenic situations and psychoactive substances. Plays a role in intestinal smooth muscle contraction, and may play a role in arterial vasoconstriction. The protein is 5-hydroxytryptamine receptor 2A (HTR2A) of Cricetulus griseus (Chinese hamster).